Consider the following 68-residue polypeptide: Cytotoxic linear peptide IsCT (68 aa).

A signal peptide spans 1–23; the sequence is MKTQFAILLVALVLFQMFAQSDA. Phe36 bears the Phenylalanine amide mark. The propeptide occupies 40 to 68; sequence GLSDLDGLDELFDGEISKADRDFLRELMR.

It belongs to the non-disulfide-bridged peptide (NDBP) superfamily. Short antimicrobial peptide (group 4) family. In terms of processing, isCTf is an enzymatic proteolytic cleavage product of IsCT by the proteases present in the venom. In terms of tissue distribution, expressed by the venom gland.

It localises to the secreted. The protein localises to the target cell membrane. Shows weak hemolytic activity and antibacterial activity against both Gram-positive and Gram-negative bacteria probably by forming pores in the cell membrane. IsCT adopts an amphipathic alpha-helical structure. Its function is as follows. Shows neither hemolytic, nor antibacterial activities, probably because it cannot adopt amphipathic alpha-helical structure. The polypeptide is Cytotoxic linear peptide IsCT (Opisthacanthus madagascariensis (Scorpion)).